The sequence spans 272 residues: Acetylglutamate kinase (272 aa).

Substrate-binding positions include 41–42 (GG), R63, and N166.

It belongs to the acetylglutamate kinase family. ArgB subfamily.

The protein resides in the cytoplasm. It catalyses the reaction N-acetyl-L-glutamate + ATP = N-acetyl-L-glutamyl 5-phosphate + ADP. Its pathway is amino-acid biosynthesis; L-arginine biosynthesis; N(2)-acetyl-L-ornithine from L-glutamate: step 2/4. Functionally, catalyzes the ATP-dependent phosphorylation of N-acetyl-L-glutamate. This is Acetylglutamate kinase from Anaeromyxobacter dehalogenans (strain 2CP-1 / ATCC BAA-258).